Reading from the N-terminus, the 211-residue chain is Redox-sensing transcriptional repressor Rex (211 aa).

Residues 17–56 (KYHRYLEELMKNEVDRISSKELGEKIGFTASQIRQDLNCF) constitute a DNA-binding region (H-T-H motif). An NAD(+)-binding site is contributed by 91-96 (GAGNIG).

Belongs to the transcriptional regulatory Rex family. In terms of assembly, homodimer.

Its subcellular location is the cytoplasm. Functionally, modulates transcription in response to changes in cellular NADH/NAD(+) redox state. This Clostridium beijerinckii (strain ATCC 51743 / NCIMB 8052) (Clostridium acetobutylicum) protein is Redox-sensing transcriptional repressor Rex.